The primary structure comprises 192 residues: Shikimate kinase (192 aa).

32–37 provides a ligand contact to ATP; the sequence is GAGKSA. S36 is a binding site for Mg(2+). 3 residues coordinate substrate: D54, R78, and G100. R138 serves as a coordination point for ATP. R157 lines the substrate pocket.

This sequence belongs to the shikimate kinase family. As to quaternary structure, monomer. Mg(2+) is required as a cofactor.

The protein resides in the cytoplasm. The enzyme catalyses shikimate + ATP = 3-phosphoshikimate + ADP + H(+). The protein operates within metabolic intermediate biosynthesis; chorismate biosynthesis; chorismate from D-erythrose 4-phosphate and phosphoenolpyruvate: step 5/7. Functionally, catalyzes the specific phosphorylation of the 3-hydroxyl group of shikimic acid using ATP as a cosubstrate. This Rhizobium meliloti (strain 1021) (Ensifer meliloti) protein is Shikimate kinase.